The primary structure comprises 313 residues: Probable 5-dehydro-4-deoxyglucarate dehydratase (313 aa).

Belongs to the DapA family.

It catalyses the reaction 5-dehydro-4-deoxy-D-glucarate + H(+) = 2,5-dioxopentanoate + CO2 + H2O. It functions in the pathway carbohydrate acid metabolism; D-glucarate degradation; 2,5-dioxopentanoate from D-glucarate: step 2/2. In Bradyrhizobium sp. (strain BTAi1 / ATCC BAA-1182), this protein is Probable 5-dehydro-4-deoxyglucarate dehydratase.